Reading from the N-terminus, the 1122-residue chain is Receptor-type guanylate cyclase gcy-5 (1122 aa).

The signal sequence occupies residues 1-19 (MRLLYFSMVLLWVLGASEC). Residues 20–486 (QVIPSSRRTL…CPVQFWDQYG (467 aa)) lie on the Extracellular side of the membrane. N-linked (GlcNAc...) asparagine glycosylation is found at asparagine 252, asparagine 299, asparagine 344, asparagine 350, asparagine 378, asparagine 434, and asparagine 439. Residues 487–507 (VLIFVASIVLIFLICIMLMCF) traverse the membrane as a helical segment. At 508–1122 (GFMIRGRRAE…KSKMDTLKVV (615 aa)) the chain is on the cytoplasmic side. Residues 536–562 (QKEKRKPNSRRSLQSGPSTITGESKMT) form a disordered region. The region spanning 542–830 (PNSRRSLQSG…NTNLMDHVFN (289 aa)) is the Protein kinase domain. The span at 545-559 (RRSLQSGPSTITGES) shows a compositional bias: polar residues. Residues 888 to 1018 (TVLFSDVVKF…DTVNTASRME (131 aa)) form the Guanylate cyclase domain. Residues 1071-1122 (SDTKSLSTRTTPPITDENWPPQMKEDLKKRAVTPYPERQRSGKSKMDTLKVV) form a disordered region. Residues 1074-1083 (KSLSTRTTPP) show a composition bias toward polar residues. Residues 1107 to 1122 (ERQRSGKSKMDTLKVV) are compositionally biased toward basic and acidic residues.

This sequence belongs to the adenylyl cyclase class-4/guanylyl cyclase family. In terms of tissue distribution, expressed in both ASEL and ASER neurons during early embryonic stages and becomes specifically expressed in ASER neuron in early larval stage.

The protein localises to the cell membrane. It catalyses the reaction GTP = 3',5'-cyclic GMP + diphosphate. In terms of biological role, guanylate cyclase involved in the production of the second messenger cGMP. Unlike other guanylate cyclases expressed in ASE neurons, may not play a role in chemotaxis responses to salt ions mediated by ASE sensory neurons. This Caenorhabditis elegans protein is Receptor-type guanylate cyclase gcy-5.